The chain runs to 346 residues: Alkylated DNA repair protein ALKBH8 homolog (346 aa).

The interval 1–21 is disordered; sequence MVQPRFVRPTQSSPSSISGEP. The segment covering 12 to 21 has biased composition (low complexity); that stretch reads SSPSSISGEP. An RRM domain is found at 24 to 102; it reads SNLYVANCGP…RSLHIRYSVL (79 aa). One can recognise a Fe2OG dioxygenase domain in the interval 208 to 328; sequence NLDQLTVNEY…RVSFTLRKVR (121 aa). Fe cation is bound by residues His-226, Asp-228, and His-298. Positions 319 and 325 each coordinate 2-oxoglutarate.

The protein belongs to the alkB family. Requires Fe(2+) as cofactor.

Its function is as follows. Binds tRNA and catalyzes the iron and alpha-ketoglutarate dependent hydroxylation of 5-methylcarboxymethyl uridine at the wobble position of the anticodon loop in tRNA via its dioxygenase domain, giving rise to 5-(S)-methoxycarbonylhydroxymethyluridine. The sequence is that of Alkylated DNA repair protein ALKBH8 homolog from Arabidopsis thaliana (Mouse-ear cress).